The following is a 619-amino-acid chain: Probable ATP-dependent RNA helicase DDX59 (619 aa).

A Glycyl lysine isopeptide (Lys-Gly) (interchain with G-Cter in SUMO2) cross-link involves residue Lys26. The tract at residues 57–98 (SESCPFPSPGGQLAEVHSVSPEQGAKDSHPSEEPVKSFSKTQ) is disordered. 2 positions are modified to phosphoserine: Ser64 and Ser76. Residues 80 to 91 (GAKDSHPSEEPV) show a composition bias toward basic and acidic residues. Residues 104-133 (GEPICVVCGRYGEYICDKTDEDVCSLECKA) form an HIT-type zinc finger. The segment at 142–161 (KEEKSKLSNPQKADSEPESP) is disordered. 2 positions are modified to phosphoserine: Ser156 and Ser160. A Q motif motif is present at residues 203-231 (IDFEHCSLPEVLNHNLKKSGYEVPTPIQM). A Helicase ATP-binding domain is found at 234–405 (IPVGLLGRDI…SQLLHNPVRI (172 aa)). ATP is bound at residue 247 to 254 (ADTGSGKT). Positions 353–356 (DEAD) match the DEAD box motif. Positions 416–579 (NVRQIILWVE…ILPPQLLNSP (164 aa)) constitute a Helicase C-terminal domain.

This sequence belongs to the DEAD box helicase family. DDX59 subfamily. In terms of assembly, interacts (via HIT-type zinc finger) with the RUVBL1/RUVBL2 complex in the presence of ADP. As to expression, expressed in fibroblasts (at protein level).

The protein resides in the cytoplasm. The protein localises to the nucleus. The catalysed reaction is ATP + H2O = ADP + phosphate + H(+). The chain is Probable ATP-dependent RNA helicase DDX59 (DDX59) from Homo sapiens (Human).